A 277-amino-acid chain; its full sequence is uncharacterized protein (277 aa).

4 consecutive transmembrane segments (helical) span residues 37 to 59 (YLRY…LYIW), 63 to 82 (LIFG…PKVI), 214 to 236 (MLCG…KTYI), and 246 to 268 (WITS…TYLF).

The protein localises to the cell membrane. This is an uncharacterized protein from Bacillus anthracis.